The chain runs to 197 residues: 3-isopropylmalate dehydratase small subunit (197 aa).

The protein belongs to the LeuD family. LeuD type 1 subfamily. Heterodimer of LeuC and LeuD.

It carries out the reaction (2R,3S)-3-isopropylmalate = (2S)-2-isopropylmalate. Its pathway is amino-acid biosynthesis; L-leucine biosynthesis; L-leucine from 3-methyl-2-oxobutanoate: step 2/4. Catalyzes the isomerization between 2-isopropylmalate and 3-isopropylmalate, via the formation of 2-isopropylmaleate. In Geobacillus sp. (strain WCH70), this protein is 3-isopropylmalate dehydratase small subunit.